Reading from the N-terminus, the 213-residue chain is Small ribosomal subunit protein uS5 (213 aa).

The interval 1-41 (MSGRERNGGRSAENNDKKERNERNGRNDRGGRNDRRNQQDE) is disordered. One can recognise an S5 DRBM domain in the interval 45–108 (FIERVVTINR…EEARKNFFRV (64 aa)).

It belongs to the universal ribosomal protein uS5 family. Part of the 30S ribosomal subunit. Contacts proteins S4 and S8.

In terms of biological role, with S4 and S12 plays an important role in translational accuracy. Functionally, located at the back of the 30S subunit body where it stabilizes the conformation of the head with respect to the body. This Corynebacterium jeikeium (strain K411) protein is Small ribosomal subunit protein uS5.